The primary structure comprises 167 residues: Transmembrane protein B169L (167 aa).

2 helical membrane-spanning segments follow: residues 28–48 (NPFI…FAIC) and 60–80 (TAIY…YVLN). N88 is a glycosylation site (N-linked (GlcNAc...) asparagine; by host).

It belongs to the asfivirus B169L family.

The protein localises to the host membrane. The protein resides in the virion. The polypeptide is Transmembrane protein B169L (African swine fever virus (isolate Tick/Malawi/Lil 20-1/1983) (ASFV)).